A 149-amino-acid chain; its full sequence is Ribose-5-phosphate isomerase B (149 aa).

D-ribulose 5-phosphate is bound at residue 9–10 (DH). The active-site Proton acceptor is the C66. 67 to 71 (GTGVG) contacts D-ribulose 5-phosphate. H99 functions as the Proton donor in the catalytic mechanism. Positions 100, 110, 133, and 137 each coordinate D-ribulose 5-phosphate.

Belongs to the LacAB/RpiB family. In terms of assembly, homodimer, and homotetramer.

The enzyme catalyses aldehydo-D-ribose 5-phosphate = D-ribulose 5-phosphate. It carries out the reaction D-allose 6-phosphate = D-allulose 6-phosphate. It functions in the pathway carbohydrate degradation; pentose phosphate pathway; D-ribose 5-phosphate from D-ribulose 5-phosphate (non-oxidative stage): step 1/1. With respect to regulation, inhibited by iodoacetate and glucose 6-phosphate. In terms of biological role, catalyzes the interconversion of ribulose-5-P and ribose-5-P. It probably also has activity on D-allose 6-phosphate. The polypeptide is Ribose-5-phosphate isomerase B (Escherichia coli (strain K12)).